A 729-amino-acid polypeptide reads, in one-letter code: Polyribonucleotide nucleotidyltransferase (729 aa).

Positions 516 and 522 each coordinate Mg(2+). Positions 581–641 constitute a KH domain; the sequence is PSTEHFSINP…EKVAAAKEHI (61 aa). The 68-residue stretch at 658-725 folds into the S1 motif domain; the sequence is GKTYVGKVKK…KGKKVELATP (68 aa).

It belongs to the polyribonucleotide nucleotidyltransferase family. Mg(2+) serves as cofactor.

The protein localises to the cytoplasm. It carries out the reaction RNA(n+1) + phosphate = RNA(n) + a ribonucleoside 5'-diphosphate. Functionally, involved in mRNA degradation. Catalyzes the phosphorolysis of single-stranded polyribonucleotides processively in the 3'- to 5'-direction. In Sulfurovum sp. (strain NBC37-1), this protein is Polyribonucleotide nucleotidyltransferase.